A 799-amino-acid chain; its full sequence is Rho GTPase-activating protein gacI (799 aa).

The Rho-GAP domain occupies 226–451 (IKLEEVFARE…LLVEHVLTIF (226 aa)). Positions 472–520 (RSQSDISSQTKPLPSLPTSPQNRSAIITGDSSSPSLNTPPVKSSLNSSD) are enriched in polar residues. Disordered regions lie at residues 472–572 (RSQS…PTSN) and 741–799 (EKQQ…LSNQ). Positions 525 to 549 (DNGSNNNNNNNTTNTITNNGIADTA) are enriched in low complexity. The span at 550-568 (TPPPPTTPTAPTTPPPPTT) shows a compositional bias: pro residues. Composition is skewed to low complexity over residues 743-752 (QQQQQQQQTN) and 759-791 (ISSN…LNSS).

Its subcellular location is the cytoplasm. Its function is as follows. Rho GTPase-activating protein involved in the signal transduction pathway. This is Rho GTPase-activating protein gacI (gacI) from Dictyostelium discoideum (Social amoeba).